The chain runs to 449 residues: Methylenetetrahydrofolate--tRNA-(uracil-5-)-methyltransferase TrmFO (449 aa).

10–15 provides a ligand contact to FAD; it reads GGGLAG.

It belongs to the MnmG family. TrmFO subfamily. FAD is required as a cofactor.

The protein localises to the cytoplasm. It catalyses the reaction uridine(54) in tRNA + (6R)-5,10-methylene-5,6,7,8-tetrahydrofolate + NADH + H(+) = 5-methyluridine(54) in tRNA + (6S)-5,6,7,8-tetrahydrofolate + NAD(+). The catalysed reaction is uridine(54) in tRNA + (6R)-5,10-methylene-5,6,7,8-tetrahydrofolate + NADPH + H(+) = 5-methyluridine(54) in tRNA + (6S)-5,6,7,8-tetrahydrofolate + NADP(+). In terms of biological role, catalyzes the folate-dependent formation of 5-methyl-uridine at position 54 (M-5-U54) in all tRNAs. This Sphingopyxis alaskensis (strain DSM 13593 / LMG 18877 / RB2256) (Sphingomonas alaskensis) protein is Methylenetetrahydrofolate--tRNA-(uracil-5-)-methyltransferase TrmFO.